The chain runs to 159 residues: Ribosomal RNA large subunit methyltransferase H (159 aa).

S-adenosyl-L-methionine contacts are provided by residues leucine 76, glycine 108, and 127–132; that span reads FGRLTL.

Belongs to the RNA methyltransferase RlmH family. Homodimer.

Its subcellular location is the cytoplasm. It carries out the reaction pseudouridine(1915) in 23S rRNA + S-adenosyl-L-methionine = N(3)-methylpseudouridine(1915) in 23S rRNA + S-adenosyl-L-homocysteine + H(+). In terms of biological role, specifically methylates the pseudouridine at position 1915 (m3Psi1915) in 23S rRNA. This Listeria monocytogenes serovar 1/2a (strain ATCC BAA-679 / EGD-e) protein is Ribosomal RNA large subunit methyltransferase H.